We begin with the raw amino-acid sequence, 83 residues long: Small ribosomal subunit protein uS17 (83 aa).

It belongs to the universal ribosomal protein uS17 family. In terms of assembly, part of the 30S ribosomal subunit.

Its function is as follows. One of the primary rRNA binding proteins, it binds specifically to the 5'-end of 16S ribosomal RNA. This Campylobacter concisus (strain 13826) protein is Small ribosomal subunit protein uS17.